We begin with the raw amino-acid sequence, 454 residues long: tRNA modification GTPase MnmE (454 aa).

3 residues coordinate (6S)-5-formyl-5,6,7,8-tetrahydrofolate: arginine 23, glutamate 80, and lysine 120. The TrmE-type G domain maps to 216-377; the sequence is GMKVVIAGRP…LRDHLKQSMG (162 aa). Asparagine 226 is a binding site for K(+). Residues 226 to 231, 245 to 251, 270 to 273, 335 to 338, and 358 to 360 each bind GTP; these read NAGKSS, TAIAGTT, DTAG, NKAD, and SAR. Serine 230 is a binding site for Mg(2+). K(+) contacts are provided by threonine 245, isoleucine 247, and threonine 250. Residue threonine 251 coordinates Mg(2+). Lysine 454 serves as a coordination point for (6S)-5-formyl-5,6,7,8-tetrahydrofolate.

This sequence belongs to the TRAFAC class TrmE-Era-EngA-EngB-Septin-like GTPase superfamily. TrmE GTPase family. Homodimer. Heterotetramer of two MnmE and two MnmG subunits. The cofactor is K(+).

Its subcellular location is the cytoplasm. Its function is as follows. Exhibits a very high intrinsic GTPase hydrolysis rate. Involved in the addition of a carboxymethylaminomethyl (cmnm) group at the wobble position (U34) of certain tRNAs, forming tRNA-cmnm(5)s(2)U34. The protein is tRNA modification GTPase MnmE of Pectobacterium atrosepticum (strain SCRI 1043 / ATCC BAA-672) (Erwinia carotovora subsp. atroseptica).